Reading from the N-terminus, the 520-residue chain is MTIAITIISSLLFLIVGLVVGSLIFKSSTEKKLAAARGTAELIVEDAKKEAETTKKEALLEAKEENHRLRTEIENELRGRRTETQKAENRLLQREENLDRKDTSLSKREATLERKEESISKRQQQIEEKESKLAEMIQAEQTELERISALSKEEAKSIILNQVEDELTHDTAIMVKETENRAKEESDKKAKNILSLAIQRCAADHVAETTVSVVTLPNDEMKGRIIGREGRNIRTLETLTGIDLIIDDTPEAVILSGFDPIRREIARIALEKLVQDGRIHPARIEEMVDKARKEVDEHIREVGEQATFEVGIHSIHPDLIKILGRLRYRTSYGQNVLNHSLEVSKLAGILAGELGEDVTLAKRAGLLHDIGKAIDHEIEGSHVEIGVELATKYKENDVVINSIASHHGDTEATSVIAVLVAAADALSAARPGARSETLENYIRRLEKLEEISESYDGVEKSYAIQAGREVRIIVEPDTIDDLSSYRLARDIRKRIEEELDYPGHIKVTVIRETRAVEYAK.

The chain crosses the membrane as a helical span at residues 5 to 25 (ITIISSLLFLIVGLVVGSLIF). The tract at residues 70–127 (RTEIENELRGRRTETQKAENRLLQREENLDRKDTSLSKREATLERKEESISKRQQQIE) is disordered. Residues 210–273 (TVSVVTLPND…EIARIALEKL (64 aa)) form the KH domain. One can recognise an HD domain in the interval 336–429 (VLNHSLEVSK…VAAADALSAA (94 aa)).

It belongs to the RNase Y family.

It localises to the cell membrane. Its function is as follows. Endoribonuclease that initiates mRNA decay. In Listeria welshimeri serovar 6b (strain ATCC 35897 / DSM 20650 / CCUG 15529 / CIP 8149 / NCTC 11857 / SLCC 5334 / V8), this protein is Ribonuclease Y.